The chain runs to 364 residues: Dihydroorotate dehydrogenase (quinone) (364 aa).

Residues 61–65 and threonine 85 contribute to the FMN site; that span reads AGFDK. Position 65 (lysine 65) interacts with substrate. Substrate is bound at residue 110–114; that stretch reads NRMGF. Positions 139 and 170 each coordinate FMN. Asparagine 170 lines the substrate pocket. Serine 173 acts as the Nucleophile in catalysis. Residue asparagine 175 coordinates substrate. Residues lysine 214 and alanine 242 each contribute to the FMN site. 243–244 contributes to the substrate binding site; the sequence is NT. FMN-binding positions include glycine 266, glycine 295, and 316 to 317; that span reads YS.

Belongs to the dihydroorotate dehydrogenase family. Type 2 subfamily. As to quaternary structure, monomer. FMN serves as cofactor.

The protein resides in the cell membrane. It catalyses the reaction (S)-dihydroorotate + a quinone = orotate + a quinol. Its pathway is pyrimidine metabolism; UMP biosynthesis via de novo pathway; orotate from (S)-dihydroorotate (quinone route): step 1/1. Catalyzes the conversion of dihydroorotate to orotate with quinone as electron acceptor. The sequence is that of Dihydroorotate dehydrogenase (quinone) from Rhodopseudomonas palustris (strain ATCC BAA-98 / CGA009).